A 203-amino-acid polypeptide reads, in one-letter code: Large ribosomal subunit protein uL13 (203 aa).

N-acetylalanine is present on alanine 2. Citrulline is present on arginine 59. The residue at position 77 (serine 77) is a Phosphoserine. The residue at position 140 (arginine 140) is a Citrulline. Lysine 191 bears the N6-acetyllysine mark.

Belongs to the universal ribosomal protein uL13 family. Component of the 60S ribosome. Component of the GAIT complex. Interacts with EIF4G1. Phosphorylation at Ser-77 upon interferon-gamma treatment in macrophages involves a DAPK1-DAPK3 kinase cascade and is causing release from the ribosome, association with the GAIT complex and subsequent involvement in transcript-selective translation inhibition. In terms of processing, citrullinated by PADI4.

Its subcellular location is the cytoplasm. In terms of biological role, associated with ribosomes but is not required for canonical ribosome function and has extra-ribosomal functions. Component of the GAIT (gamma interferon-activated inhibitor of translation) complex which mediates interferon-gamma-induced transcript-selective translation inhibition in inflammation processes. Upon interferon-gamma activation and subsequent phosphorylation dissociates from the ribosome and assembles into the GAIT complex which binds to stem loop-containing GAIT elements in the 3'-UTR of diverse inflammatory mRNAs (such as ceruplasmin) and suppresses their translation. In the GAIT complex interacts with m7G cap-bound eIF4G at or near the eIF3-binding site and blocks the recruitment of the 43S ribosomal complex. Involved in methylation of rRNA. The protein is Large ribosomal subunit protein uL13 (RPL13A) of Canis lupus familiaris (Dog).